The following is a 162-amino-acid chain: MGLETEKADVQLFMDDDSYSHHSCVDYADPEKFADSGRDRDPNRLNSNLQVGFEDVIAEPESTHSFDKVWICSHALFEISKYVIYKFLTVFLAIPLAFAAGIIFATLSCLHIWIIMPFVKTCLMVLPSVQTIWRSVTDAVIAPLCTSVGRVFSSVSLQLSRD.

The Cytoplasmic segment spans residues 1 to 86 (MGLETEKADV…FEISKYVIYK (86 aa)). Residue tyrosine 19 is modified to Phosphotyrosine; by SRC. Residues serine 20 and serine 23 each carry the phosphoserine modification. Phosphotyrosine; by SRC is present on tyrosine 27. Position 36 is a phosphoserine (serine 36). The helical intramembrane region spans 87–107 (FLTVFLAIPLAFAAGIIFATL). The Cytoplasmic segment spans residues 108–162 (SCLHIWIIMPFVKTCLMVLPSVQTIWRSVTDAVIAPLCTSVGRVFSSVSLQLSRD).

The protein belongs to the caveolin family. As to quaternary structure, monomer or homodimer. Interacts with CAV1; the interaction forms a stable heterooligomeric complex that is required for targeting to lipid rafts and for caveolae formation. Tyrosine phosphorylated forms do not form heterooligomers with the Tyr-19-phosphorylated form existing as a monomer or dimer, and the Tyr-27-form as a monomer only. Interacts (tyrosine phosphorylated form) with the SH2 domain-containing proteins, RASA1, NCK1 and SRC. Interacts (tyrosine phosphorylated form) with INSR, the interaction (Tyr-27-phosphorylated form) is increased on insulin stimulation. Interacts (Tyr-19 phosphorylated form) with MAPK1 (phosphorylated form); the interaction, promoted by insulin, leads to nuclear location and MAPK1 activation. Interacts with STAT3; the interaction is increased on insulin-induced tyrosine phosphorylation leading to STAT activation. Post-translationally, phosphorylated on serine and tyrosine residues. CAV1 promotes phosphorylation on Ser-23 which then targets the complex to the plasma membrane, lipid rafts and caveolae. Phosphorylation on Ser-36 appears to modulate mitosis in endothelial cells. Phosphorylation on both Tyr-19 and Tyr-27 is required for insulin-induced 'Ser-727' phosphorylation of STAT3 and its activation. Phosphorylation on Tyr-19 is required for insulin-induced phosphorylation of MAPK1 and DNA binding of STAT3. Tyrosine phosphorylation is induced by both EGF and insulin (By. similarity).

The protein resides in the nucleus. It is found in the cytoplasm. Its subcellular location is the golgi apparatus membrane. It localises to the cell membrane. The protein localises to the membrane. The protein resides in the caveola. Functionally, may act as a scaffolding protein within caveolar membranes. Interacts directly with G-protein alpha subunits and can functionally regulate their activity. Acts as an accessory protein in conjunction with CAV1 in targeting to lipid rafts and driving caveolae formation. The Ser-36 phosphorylated form has a role in modulating mitosis in endothelial cells. Positive regulator of cellular mitogenesis of the MAPK signaling pathway. Required for the insulin-stimulated nuclear translocation and activation of MAPK1 and STAT3, and the subsequent regulation of cell cycle progression. In Carollia perspicillata (Seba's short-tailed bat), this protein is Caveolin-2 (CAV2).